A 215-amino-acid polypeptide reads, in one-letter code: uncharacterized protein (215 aa).

Residues 98–119 (AAALAVAVASLCVCTLLLTHIV) form a helical membrane-spanning segment.

Its subcellular location is the membrane. This is an uncharacterized protein from Treponema pallidum (strain Nichols).